The chain runs to 269 residues: Autophagy-related protein 5 (269 aa).

Residue K102 forms a Glycyl lysine isopeptide (Lys-Gly) (interchain with G-Cter in ATG12) linkage.

It belongs to the ATG5 family. As to quaternary structure, conjugated with ATG12. The ATG5-ATG12 conjugate forms a complex with several units of ATG16. The ATG12-ATG5 conjugate also associates with ATG3. In terms of processing, conjugated to ATG12; which is essential for autophagy. Conjugation with ATG12 involves ATG7 as an E1-like activating enzyme and ATG10 as an E2-like conjugating enzyme.

Its subcellular location is the preautophagosomal structure membrane. Its function is as follows. Involved in cytoplasm to vacuole transport (Cvt) and autophagic vesicle formation. Autophagy is essential for maintenance of amino acid levels and protein synthesis under nitrogen starvation. Required for selective autophagic degradation of the nucleus (nucleophagy). Also required for mitophagy, which eliminates defective or superfluous mitochondria in order to fulfill cellular energy requirements and prevent excess ROS production. Conjugation with ATG12, through a ubiquitin-like conjugating system involving ATG7 as an E1-like activating enzyme and ATG10 as an E2-like conjugating enzyme, is essential for its function. The ATG12-ATG5 conjugate acts as an E3-like enzyme which is required for lipidation of ATG8 and ATG8 association to the vesicle membranes. ATG12-ATG5 rearranges the ATG3 catalytic center and enhances its E2 activity. Required for proper vegetative growth, asexual/sexual reproduction, but, unlike several plant and animal pathogenic fungi, where ATG5 is required for infection, in B.bassiana it is dispensable for pathogenesis. In Beauveria bassiana (strain ARSEF 2860) (White muscardine disease fungus), this protein is Autophagy-related protein 5.